A 492-amino-acid chain; its full sequence is N-succinylglutamate 5-semialdehyde dehydrogenase (492 aa).

220-225 (GSAGTG) lines the NAD(+) pocket. Active-site residues include E243 and C277.

Belongs to the aldehyde dehydrogenase family. AstD subfamily.

It catalyses the reaction N-succinyl-L-glutamate 5-semialdehyde + NAD(+) + H2O = N-succinyl-L-glutamate + NADH + 2 H(+). The protein operates within amino-acid degradation; L-arginine degradation via AST pathway; L-glutamate and succinate from L-arginine: step 4/5. Catalyzes the NAD-dependent reduction of succinylglutamate semialdehyde into succinylglutamate. The sequence is that of N-succinylglutamate 5-semialdehyde dehydrogenase from Cronobacter sakazakii (strain ATCC BAA-894) (Enterobacter sakazakii).